Here is a 344-residue protein sequence, read N- to C-terminus: DNA-directed RNA polymerase subunit alpha (344 aa).

Residues 1–238 (MKVIKTAPLI…KQLGVFGERP (238 aa)) form an alpha N-terminal domain (alpha-NTD) region. Residues 254–344 (AKDLSAKIES…EKLEDKGGND (91 aa)) are alpha C-terminal domain (alpha-CTD).

It belongs to the RNA polymerase alpha chain family. In terms of assembly, homodimer. The RNAP catalytic core consists of 2 alpha, 1 beta, 1 beta' and 1 omega subunit. When a sigma factor is associated with the core the holoenzyme is formed, which can initiate transcription.

It carries out the reaction RNA(n) + a ribonucleoside 5'-triphosphate = RNA(n+1) + diphosphate. In terms of biological role, DNA-dependent RNA polymerase catalyzes the transcription of DNA into RNA using the four ribonucleoside triphosphates as substrates. The chain is DNA-directed RNA polymerase subunit alpha from Helicobacter pylori (strain ATCC 700392 / 26695) (Campylobacter pylori).